Consider the following 210-residue polypeptide: MLTIAIPKGGLLPEAIALLQQVGLDFSAFLDKKNRQLQITDPTGTARAMLVRTHDVPVYVEYGQAQLGFAGYDVLREKKPDVANLLDLGFGGCRLSVAVPKASPYKNPRQLPPNCRVASKFVNCAKDYFRDLDLPIEVIPLHGSVELGPITGMSEAIVDLVSTGNTLRENNLEEVEVLFHSTVRLIAHPTSYRANRHNMLDWVQKLEQIL.

Belongs to the ATP phosphoribosyltransferase family. Short subfamily. As to quaternary structure, heteromultimer composed of HisG and HisZ subunits.

The protein resides in the cytoplasm. The enzyme catalyses 1-(5-phospho-beta-D-ribosyl)-ATP + diphosphate = 5-phospho-alpha-D-ribose 1-diphosphate + ATP. Its pathway is amino-acid biosynthesis; L-histidine biosynthesis; L-histidine from 5-phospho-alpha-D-ribose 1-diphosphate: step 1/9. In terms of biological role, catalyzes the condensation of ATP and 5-phosphoribose 1-diphosphate to form N'-(5'-phosphoribosyl)-ATP (PR-ATP). Has a crucial role in the pathway because the rate of histidine biosynthesis seems to be controlled primarily by regulation of HisG enzymatic activity. The chain is ATP phosphoribosyltransferase from Picosynechococcus sp. (strain ATCC 27264 / PCC 7002 / PR-6) (Agmenellum quadruplicatum).